The sequence spans 434 residues: MAKTDLARRVYNHTWKLDPIIRSLLDTDFYKLLMLQMIWGLYPRVDATFSLINRTSSVRLADEIDEGELRAQLDHARTLRFSKKEMIWLAGNTFYGRKQIFQPEFLAWLHDFQLPEYELRRKDGQYELHFHGPWTHTTMWEIPALAIINELRSRAAMKNLGPFSLDVLYARAKAKMWSKVERLRQLPDLKISDFGTRRRHSFLWQRWCVEALKEGIGSAFTGTSNVLLAMDTDLEALGTNAHELPMVLAALAKTDDELRSAPYRVLQDWNRYYGGNLLIVLPDAFGTAAFLRNAPDWVADWTGFRPDSAPPIEGGERIIEWWKSKGKDPREKLLIFSDALDVDTIEETYRHFEGRVRMGFGWGTNLTNDFAGCAPQSIDGLKAISLVCKVTDANGHPAVKLSDNPQKATGDPKEVARYLRFFGNEERVEQLVRV.

Position 242 is a phosphohistidine; by autocatalysis (His242).

It belongs to the NAPRTase family. Transiently phosphorylated on a His residue during the reaction cycle. Phosphorylation strongly increases the affinity for substrates and increases the rate of nicotinate D-ribonucleotide production. Dephosphorylation regenerates the low-affinity form of the enzyme, leading to product release.

It carries out the reaction nicotinate + 5-phospho-alpha-D-ribose 1-diphosphate + ATP + H2O = nicotinate beta-D-ribonucleotide + ADP + phosphate + diphosphate. It participates in cofactor biosynthesis; NAD(+) biosynthesis; nicotinate D-ribonucleotide from nicotinate: step 1/1. Functionally, catalyzes the synthesis of beta-nicotinate D-ribonucleotide from nicotinate and 5-phospho-D-ribose 1-phosphate at the expense of ATP. In Brucella abortus (strain S19), this protein is Nicotinate phosphoribosyltransferase.